A 200-amino-acid chain; its full sequence is GTP-binding protein ypt2 (200 aa).

16 to 23 (GDSGVGKS) is a binding site for GTP. Positions 38–46 (FITTIGIDF) match the Effector region motif. GTP is bound by residues 64–68 (DTAGQ) and 122–125 (NKCD). 2 S-geranylgeranyl cysteine lipidation sites follow: C199 and C200.

The protein belongs to the small GTPase superfamily. Rab family.

It localises to the cell membrane. Its function is as follows. Protein transport. Probably involved in vesicular traffic. This Schizosaccharomyces pombe (strain 972 / ATCC 24843) (Fission yeast) protein is GTP-binding protein ypt2 (ypt2).